The chain runs to 121 residues: Mitochondrial intermembrane space cysteine motif-containing protein MIX14 (121 aa).

2 CHCH domains span residues 14 to 56 (VANC…VPSV) and 60 to 105 (MSEC…VKNK). 4 consecutive short sequence motifs (cx9C motif) follow at residues 17 to 27 (CPQEFLQYHKC), 38 to 48 (CKDGRMILSTC), 63 to 73 (CSEPMKKYDQC), and 87 to 97 (CLGFLQDLRKC). 4 disulfides stabilise this stretch: Cys-17/Cys-48, Cys-27/Cys-38, Cys-63/Cys-97, and Cys-73/Cys-87.

The protein localises to the mitochondrion intermembrane space. The protein is Mitochondrial intermembrane space cysteine motif-containing protein MIX14 (MIX14) of Saccharomyces cerevisiae (strain ATCC 204508 / S288c) (Baker's yeast).